Consider the following 573-residue polypeptide: 2-succinyl-5-enolpyruvyl-6-hydroxy-3-cyclohexene-1-carboxylate synthase (573 aa).

The protein belongs to the TPP enzyme family. MenD subfamily. As to quaternary structure, homodimer. Requires Mg(2+) as cofactor. Mn(2+) is required as a cofactor. Thiamine diphosphate serves as cofactor.

The enzyme catalyses isochorismate + 2-oxoglutarate + H(+) = 5-enolpyruvoyl-6-hydroxy-2-succinyl-cyclohex-3-ene-1-carboxylate + CO2. It participates in quinol/quinone metabolism; 1,4-dihydroxy-2-naphthoate biosynthesis; 1,4-dihydroxy-2-naphthoate from chorismate: step 2/7. It functions in the pathway quinol/quinone metabolism; menaquinone biosynthesis. Functionally, catalyzes the thiamine diphosphate-dependent decarboxylation of 2-oxoglutarate and the subsequent addition of the resulting succinic semialdehyde-thiamine pyrophosphate anion to isochorismate to yield 2-succinyl-5-enolpyruvyl-6-hydroxy-3-cyclohexene-1-carboxylate (SEPHCHC). This Shewanella sp. (strain ANA-3) protein is 2-succinyl-5-enolpyruvyl-6-hydroxy-3-cyclohexene-1-carboxylate synthase.